A 34-amino-acid chain; its full sequence is U1-poneritoxin-Na2a (34 aa).

Expressed by the venom gland.

It localises to the secreted. Functionally, may have antimicrobial properties, like most ant linear peptides. The protein is U1-poneritoxin-Na2a of Neoponera apicalis (Ant).